Here is a 273-residue protein sequence, read N- to C-terminus: Putative pyruvate, phosphate dikinase regulatory protein (273 aa).

ADP is bound at residue 149 to 156; sequence GPSRTSKT.

It belongs to the pyruvate, phosphate/water dikinase regulatory protein family. PDRP subfamily.

The enzyme catalyses N(tele)-phospho-L-histidyl/L-threonyl-[pyruvate, phosphate dikinase] + ADP = N(tele)-phospho-L-histidyl/O-phospho-L-threonyl-[pyruvate, phosphate dikinase] + AMP + H(+). The catalysed reaction is N(tele)-phospho-L-histidyl/O-phospho-L-threonyl-[pyruvate, phosphate dikinase] + phosphate + H(+) = N(tele)-phospho-L-histidyl/L-threonyl-[pyruvate, phosphate dikinase] + diphosphate. In terms of biological role, bifunctional serine/threonine kinase and phosphorylase involved in the regulation of the pyruvate, phosphate dikinase (PPDK) by catalyzing its phosphorylation/dephosphorylation. The protein is Putative pyruvate, phosphate dikinase regulatory protein of Rickettsia conorii (strain ATCC VR-613 / Malish 7).